A 2073-amino-acid chain; its full sequence is Histone acetyltransferase KAT6B (2073 aa).

The region spanning methionine 1–proline 77 is the SAMD1-like winged helix (WH) domain. A disordered region spans residues lysine 72 to glycine 97. An H15 domain is found at arginine 103–tyrosine 176. 2 consecutive PHD-type zinc fingers follow at residues isoleucine 213–cysteine 272 and cysteine 269–lysine 320. The residue at position 355 (serine 355) is a Phosphoserine. Disordered regions lie at residues glutamate 360–alanine 409, phenylalanine 442–leucine 531, threonine 553–serine 583, and valine 639–aspartate 663. Residues glycine 361–glycine 717 form a negatively regulates HAT activity region. Over residues lysine 379–leucine 399 the composition is skewed to polar residues. The span at aspartate 447–lysine 460 shows a compositional bias: basic and acidic residues. A compositionally biased stretch (polar residues) spans glutamine 470–glutamine 485. Residues lysine 488–proline 499 are compositionally biased toward pro residues. A compositionally biased stretch (low complexity) spans serine 501–leucine 531. Serine 647 bears the Phosphoserine mark. A Glycyl lysine isopeptide (Lys-Gly) (interchain with G-Cter in SUMO2) cross-link involves residue lysine 673. The region spanning aspartate 715–proline 989 is the MYST-type HAT domain. The interval arginine 718–alanine 1008 is catalytic. Residues leucine 748 to tryptophan 773 form a C2HC MYST-type zinc finger. Positions glutamate 752–alanine 1008 are interaction with BRPF1. Residue lysine 815 is modified to N6-acetyllysine; by autocatalysis. Residues serine 856–isoleucine 860 and glutamine 865–arginine 871 each bind acetyl-CoA. The Proton donor/acceptor role is filled by glutamate 891. Acetyl-CoA is bound at residue serine 895. Disordered stretches follow at residues glutamate 1022–valine 1452, serine 1484–aspartate 1538, and glutamine 1580–valine 1619. Polar residues predominate over residues isoleucine 1025 to asparagine 1043. 3 positions are modified to N6-acetyllysine: lysine 1038, lysine 1042, and lysine 1044. Serine 1048 bears the Phosphoserine mark. Positions serine 1069 to asparagine 1105 are enriched in acidic residues. A compositionally biased stretch (polar residues) spans isoleucine 1106 to glutamine 1117. A compositionally biased stretch (basic residues) spans isoleucine 1121–isoleucine 1140. A compositionally biased stretch (low complexity) spans serine 1142–valine 1155. Residues proline 1187–lysine 1200 are compositionally biased toward basic residues. Basic and acidic residues-rich tracts occupy residues serine 1229–lysine 1243, arginine 1306–glycine 1315, and glutamate 1341–proline 1350. The span at glutamate 1351–glycine 1374 shows a compositional bias: acidic residues. Composition is skewed to basic and acidic residues over residues valine 1378–lysine 1390 and serine 1396–aspartate 1407. Residues histidine 1408–glutamate 1417 are compositionally biased toward acidic residues. Over residues histidine 1433–valine 1452 the composition is skewed to basic and acidic residues. A compositionally biased stretch (acidic residues) spans alanine 1498 to proline 1507. A compositionally biased stretch (basic and acidic residues) spans glutamine 1513–glutamate 1529. The tract at residues glutamine 1560 to arginine 2073 is interaction with RUNX1 and RUNX2. A compositionally biased stretch (polar residues) spans glutamine 1580 to cysteine 1591. The span at serine 1594 to valine 1611 shows a compositional bias: low complexity.

The protein belongs to the MYST (SAS/MOZ) family. In terms of assembly, component of the MOZ/MORF complex composed at least of ING5, KAT6A, KAT6B, MEAF6 and one of BRPF1, BRD1/BRPF2 and BRPF3. Interacts with RUNX1 and RUNX2. Post-translationally, autoacetylated. Autoacetylation at Lys-815 is required for proper function. Ubiquitously expressed, with high levels in heart, pancreas, testis and ovary.

Its subcellular location is the nucleus. The enzyme catalyses L-lysyl-[protein] + acetyl-CoA = N(6)-acetyl-L-lysyl-[protein] + CoA + H(+). In terms of biological role, histone acetyltransferase which may be involved in both positive and negative regulation of transcription. Required for RUNX2-dependent transcriptional activation. May be involved in cerebral cortex development. Component of the MOZ/MORF complex which has a histone H3 acetyltransferase activity. The polypeptide is Histone acetyltransferase KAT6B (KAT6B) (Homo sapiens (Human)).